A 90-amino-acid polypeptide reads, in one-letter code: Phenol 2-monooxygenase, stimulatory component DmpM (90 aa).

Belongs to the TmoD/XamoD family. As to quaternary structure, active as a monomer. Formation of dimers inactivates the protein. The multicomponent enzyme phenol hydroxylase is formed by DmpL (P1 component), DmpM (P2 component), DmpN (P3 component), DmpO (P4 component) and DmpP (P5 component).

It catalyses the reaction phenol + NADH + O2 + H(+) = catechol + NAD(+) + H2O. The protein operates within aromatic compound metabolism; phenol degradation. Part of a multicomponent enzyme which catalyzes the degradation of phenol and some of its methylated derivatives. DmpM is a regulatory subunit that stimulates the phenol hydroxylase activity of the complex. The steady-state rate of phenol hydroxylase turnover is dependent on the DmpM concentration, with a maximum observed rate at about 1.5 DmpM per oxygenase monomer. Higher concentrations of DmpM inhibit phenol hydroxylase activity. May act by altering the redox potential of the oxygenase. Required for growth on phenol and for in vitro phenol hydroxylase activity. This chain is Phenol 2-monooxygenase, stimulatory component DmpM, found in Pseudomonas sp. (strain CF600).